The chain runs to 131 residues: Protein yippee-like PJ691.02 (131 aa).

Positions 12 to 109 (RCYVCAKCKT…LEMQDAVLQR (98 aa)) constitute a Yippee domain. 4 residues coordinate Zn(2+): Cys16, Cys19, Cys72, and Cys75.

This sequence belongs to the yippee family.

The protein is Protein yippee-like PJ691.02 of Schizosaccharomyces pombe (strain 972 / ATCC 24843) (Fission yeast).